The primary structure comprises 446 residues: Chromosomal replication initiator protein DnaA (446 aa).

A domain I, interacts with DnaA modulators region spans residues 1 to 81 (MENISDLWNS…AKLAIRFIIP (81 aa)). The segment at 81 to 109 (PQSQAEEDIDLPPVKRNPAQDDSAHLPQS) is domain II. Positions 110–326 (MLNPKYTFDT…GALIRVVAYS (217 aa)) are domain III, AAA+ region. ATP-binding residues include Gly154, Gly156, Lys157, and Thr158. The tract at residues 327-446 (SLINKDINAD…QVEEINGILK (120 aa)) is domain IV, binds dsDNA.

Belongs to the DnaA family. Oligomerizes as a right-handed, spiral filament on DNA at oriC.

The protein resides in the cytoplasm. Plays an essential role in the initiation and regulation of chromosomal replication. ATP-DnaA binds to the origin of replication (oriC) to initiate formation of the DNA replication initiation complex once per cell cycle. Binds the DnaA box (a 9 base pair repeat at the origin) and separates the double-stranded (ds)DNA. Forms a right-handed helical filament on oriC DNA; dsDNA binds to the exterior of the filament while single-stranded (ss)DNA is stabiized in the filament's interior. The ATP-DnaA-oriC complex binds and stabilizes one strand of the AT-rich DNA unwinding element (DUE), permitting loading of DNA polymerase. After initiation quickly degrades to an ADP-DnaA complex that is not apt for DNA replication. Binds acidic phospholipids. This is Chromosomal replication initiator protein DnaA from Bacillus cereus (strain G9842).